A 254-amino-acid polypeptide reads, in one-letter code: Emerin (254 aa).

The residue at position 1 (M1) is an N-acetylmethionine. One can recognise an LEM domain in the interval 1–45 (MDNYADLSDTELTTLLRRYNIPHGPVVGSTRRLYEKKIFEYETQR). Phosphoserine occurs at positions 8 and 29. Residues 46 to 222 (RRLSPPSSSA…PGAGLGQDRQ (177 aa)) are interaction with F-actin. S49 is subject to Phosphoserine; by PKA. Residues S54, S60, S87, S98, S141, S142, and S143 each carry the phosphoserine modification. Position 161 is a phosphotyrosine (Y161). Residues 168-186 (RPVSASRSSLDLSYYPTSS) are interaction with CTNNB1. 3 positions are modified to phosphoserine: S171, S173, and S175. A helical membrane pass occupies residues 223–243 (VPLWGQLLLFLVFVIVLFFIY).

In terms of assembly, interacts with lamins A and C, BANF1, GMCL, BCLAF1 and YTHDC1/YT521. Interacts with TMEM43; the interaction retains emerin in the nuclear inner membrane. Interacts with SUN1 and SUN2. Interacts with ACTB, SPTAN1, F-actin, CTNNB1 and beta-tubulin. Interacts with TMEM201. Interacts with NEMP1. In terms of processing, found in four different phosphorylated forms, three of which appear to be associated with the cell cycle. In terms of tissue distribution, skeletal muscle, heart, colon, testis, ovary and pancreas.

The protein resides in the nucleus inner membrane. It localises to the nucleus outer membrane. In terms of biological role, stabilizes and promotes the formation of a nuclear actin cortical network. Stimulates actin polymerization in vitro by binding and stabilizing the pointed end of growing filaments. Inhibits beta-catenin activity by preventing its accumulation in the nucleus. Acts by influencing the nuclear accumulation of beta-catenin through a CRM1-dependent export pathway. Links centrosomes to the nuclear envelope via a microtubule association. Required for proper localization of non-farnesylated prelamin-A/C. Together with NEMP1, contributes to nuclear envelope stiffness in germ cells. EMD and BAF are cooperative cofactors of HIV-1 infection. Association of EMD with the viral DNA requires the presence of BAF and viral integrase. The association of viral DNA with chromatin requires the presence of BAF and EMD. In Homo sapiens (Human), this protein is Emerin (EMD).